The chain runs to 683 residues: Probable potassium transport system protein Kup 1 (683 aa).

A run of 12 helical transmembrane segments spans residues 13–33 (GLLI…LYVM), 55–75 (ISLV…FIAL), 98–118 (WLVL…TLTP), 139–159 (VPVS…LLLF), 168–188 (IIGK…GVIG), 218–238 (AGIF…ALYS), 251–271 (SWPY…VWIL), 296–316 (LAAI…LITG), 345–365 (IYIP…VLFF), 376–396 (GLSI…WLAM), 401–421 (TIWN…FMLA), and 426–446 (FMHG…IMYV).

The protein belongs to the HAK/KUP transporter (TC 2.A.72) family.

The protein resides in the cell membrane. It carries out the reaction K(+)(in) + H(+)(in) = K(+)(out) + H(+)(out). In terms of biological role, transport of potassium into the cell. Likely operates as a K(+):H(+) symporter. This Lactobacillus johnsonii (strain CNCM I-12250 / La1 / NCC 533) protein is Probable potassium transport system protein Kup 1.